We begin with the raw amino-acid sequence, 357 residues long: Dynein axonemal assembly factor 10 (357 aa).

WD repeat units follow at residues 63 to 105 (EKAK…VPVY), 115 to 154 (NTID…DPVA), 162 to 205 (ENKR…LRWE), 207 to 249 (NIKN…PTKG), 257 to 297 (AHKS…QRSK), and 319 to 357 (LSTQ…LHKI).

In terms of assembly, component of the PAQosome complex which is responsible for the biogenesis of several protein complexes and which consists of R2TP complex members RUVBL1, RUVBL2, RPAP3 and PIH1D1, URI complex members PFDN2, PFDN6, PDRG1, UXT and URI1 as well as ASDURF, POLR2E and DNAAF10/WDR92. Interacts with PIH1D1; the interaction associates DNAAF10 with the R2TP complex. Interacts with several dynein axonemal assembly factors.

The protein localises to the dynein axonemal particle. Its function is as follows. Key assembly factor specifically required for the stability of axonemal dynein heavy chains in cytoplasm. In Bos taurus (Bovine), this protein is Dynein axonemal assembly factor 10 (DNAAF10).